The chain runs to 565 residues: Arginine--tRNA ligase (565 aa).

The 'HIGH' region motif lies at 126–136 (ANPTGPLHIGH).

The protein belongs to the class-I aminoacyl-tRNA synthetase family. In terms of assembly, monomer.

The protein resides in the cytoplasm. It catalyses the reaction tRNA(Arg) + L-arginine + ATP = L-arginyl-tRNA(Arg) + AMP + diphosphate. This Wolbachia sp. subsp. Brugia malayi (strain TRS) protein is Arginine--tRNA ligase.